A 71-amino-acid chain; its full sequence is Small ribosomal subunit protein bS21B (71 aa).

Belongs to the bacterial ribosomal protein bS21 family.

In Rhizobium johnstonii (strain DSM 114642 / LMG 32736 / 3841) (Rhizobium leguminosarum bv. viciae), this protein is Small ribosomal subunit protein bS21B.